A 226-amino-acid chain; its full sequence is Protein Thf1 (226 aa).

A coiled-coil region spans residues 183–213 (EEKMQKDLDLYRSNLEKMDQLLTVIEEALQA).

The protein belongs to the THF1 family.

Its function is as follows. May be involved in photosynthetic membrane biogenesis. In Gloeothece citriformis (strain PCC 7424) (Cyanothece sp. (strain PCC 7424)), this protein is Protein Thf1.